The sequence spans 515 residues: tRNA pseudouridine synthase Pus10 (515 aa).

Residues Cys21 and Cys24 each coordinate Zn(2+). The stretch at 42–85 forms a coiled coil; it reads KEVTYELQKYLSHGDPAEENDTPPSKKAKIEEDTSSNEHLGNCE. The tract at residues 55 to 82 is disordered; it reads GDPAEENDTPPSKKAKIEEDTSSNEHLG. Zn(2+) is bound by residues Cys96 and Cys99. The RNA binding forefinger loop stretch occupies residues 291–304; it reads TPWIIDGERKIESS. Catalysis depends on Asp331, which acts as the Nucleophile. The interval 428–443 is RNA binding thumb loop; it reads QKTPLRVLHRRPLASR.

This sequence belongs to the pseudouridine synthase Pus10 family.

It localises to the nucleus. The protein localises to the cytoplasm. The protein resides in the mitochondrion. It catalyses the reaction uridine(55) in tRNA = pseudouridine(55) in tRNA. It carries out the reaction uridine(54) in tRNA = pseudouridine(54) in tRNA. Its function is as follows. Protein with different functions depending on its subcellular location: involved in miRNA processing in the nucleus and acts as a tRNA pseudouridylate synthase in the cytoplasm. In the cytoplasm, acts as a pseudouridylate synthase by catalyzing synthesis of pseudouridine(54) and pseudouridine(55) from uracil-54 and uracil-55, respectively, in the psi GC loop of a subset of tRNAs. tRNA pseudouridylate synthase activity is enhanced by the presence of 1-methyladenosine at position 53-61 of tRNAs. Does not show tRNA pseudouridylate synthase activity in the nucleus. In the nucleus, promotes primary microRNAs (pri-miRNAs) processing independently of its RNA pseudouridylate synthase activity. Binds pri-miRNAs. The sequence is that of tRNA pseudouridine synthase Pus10 from Xenopus laevis (African clawed frog).